The chain runs to 864 residues: Valine--tRNA ligase (864 aa).

The 'HIGH' region motif lies at 42–52 (PTISGKLHIGH). Positions 589–593 (KMSKS) match the 'KMSKS' region motif. ATP is bound at residue Lys-592.

It belongs to the class-I aminoacyl-tRNA synthetase family. ValS type 2 subfamily. As to quaternary structure, monomer.

It localises to the cytoplasm. It carries out the reaction tRNA(Val) + L-valine + ATP = L-valyl-tRNA(Val) + AMP + diphosphate. Catalyzes the attachment of valine to tRNA(Val). As ValRS can inadvertently accommodate and process structurally similar amino acids such as threonine, to avoid such errors, it has a 'posttransfer' editing activity that hydrolyzes mischarged Thr-tRNA(Val) in a tRNA-dependent manner. The protein is Valine--tRNA ligase of Wolbachia pipientis wMel.